An 86-amino-acid chain; its full sequence is Small ribosomal subunit protein bS20 (86 aa).

Residues 1-25 (MANSASSRKRARQAVKRNKHNSQIR) form a disordered region. Basic residues predominate over residues 7–25 (SRKRARQAVKRNKHNSQIR).

The protein belongs to the bacterial ribosomal protein bS20 family.

Its function is as follows. Binds directly to 16S ribosomal RNA. This Vesicomyosocius okutanii subsp. Calyptogena okutanii (strain HA) protein is Small ribosomal subunit protein bS20.